The primary structure comprises 682 residues: Putative protein RhsE (682 aa).

The span at 348-360 (ENGEREKAQRRSL) shows a compositional bias: basic and acidic residues. The tract at residues 348-372 (ENGEREKAQRRSLAETLQQEGSENG) is disordered.

This sequence belongs to the RHS family.

In terms of biological role, rhs elements have a nonessential function. They may play an important role in the natural ecology of the cell. The protein is Putative protein RhsE (rhsE) of Escherichia coli (strain K12).